Here is a 191-residue protein sequence, read N- to C-terminus: Penicillin-binding protein activator LpoB (191 aa).

A signal peptide spans 1-16 (MKRILFVILSTMLLAS). C17 carries the N-palmitoyl cysteine lipid modification. Residue C17 is the site of S-diacylglycerol cysteine attachment. Positions 25 to 48 (QPAPVTPVEPKEKQETTPIEPSEK) are disordered.

The protein belongs to the LpoB family. As to quaternary structure, interacts with PBP1b.

The protein resides in the cell outer membrane. In terms of biological role, regulator of peptidoglycan synthesis that is essential for the function of penicillin-binding protein 1B (PBP1b). The chain is Penicillin-binding protein activator LpoB from Xenorhabdus nematophila (strain ATCC 19061 / DSM 3370 / CCUG 14189 / LMG 1036 / NCIMB 9965 / AN6).